We begin with the raw amino-acid sequence, 185 residues long: Prenylated Rab acceptor protein 1 (185 aa).

The Cytoplasmic portion of the chain corresponds to 1–78; it reads MAAQKDQQKD…RNVEYYQSNY (78 aa). The interval 30 to 54 is required for interaction with prenylated RAB3A and VAMP2; the sequence is AGREWLERRRATIRPWGTFVDQQRF. 2 helical membrane passes run 79 to 94 and 95 to 112; these read VFVFLGLILYCVVTSP and MLLVALAVFFGACYILYL. At 113–131 the chain is on the cytoplasmic side; that stretch reads RTLQSKLVLFGREVSPAHQ. 2 helical membrane passes run 132-148 and 149-165; these read YALAGGVSFPFFWLAGA and GSAVFWVLGATLVLIGS. The segment at 165-185 is required for interaction with GDI1; the sequence is SHAAFHQMEPADGEELQMEPV. Topologically, residues 166–185 are cytoplasmic; the sequence is HAAFHQMEPADGEELQMEPV. A required for interaction with prenylated RAB3A and VAMP2 region spans residues 175-185; that stretch reads ADGEELQMEPV. The segment at 175–185 is homodimerization; sequence ADGEELQMEPV.

Belongs to the PRA1 family. Homodimer. Interacts with VAMP2 (synaptobrevin-2), GDI1, NRDG1 and PCLO. Interacts with prenylated Rab proteins (including RAB5 and RAB6), and with the members of the Ras superfamily HRAS, RHOA, TC21, and RAP1A.

It localises to the cell membrane. It is found in the cytoplasm. Its subcellular location is the golgi apparatus. The protein localises to the cytoplasmic vesicle. The protein resides in the secretory vesicle. It localises to the synaptic vesicle. Its function is as follows. General Rab protein regulator required for vesicle formation from the Golgi complex. May control vesicle docking and fusion by mediating the action of Rab GTPases to the SNARE complexes. In addition it inhibits the removal of Rab GTPases from the membrane by GDI1. This is Prenylated Rab acceptor protein 1 (Rabac1) from Mus musculus (Mouse).